A 387-amino-acid polypeptide reads, in one-letter code: Ferrochelatase (387 aa).

His196 and Glu277 together coordinate Fe cation.

It belongs to the ferrochelatase family.

The protein resides in the cytoplasm. The catalysed reaction is heme b + 2 H(+) = protoporphyrin IX + Fe(2+). It participates in porphyrin-containing compound metabolism; protoheme biosynthesis; protoheme from protoporphyrin-IX: step 1/1. Functionally, catalyzes the ferrous insertion into protoporphyrin IX. In Rippkaea orientalis (strain PCC 8801 / RF-1) (Cyanothece sp. (strain PCC 8801)), this protein is Ferrochelatase.